The following is a 440-amino-acid chain: T-box transcription factor TBX20 (440 aa).

A DNA-binding region (T-box) is located at residues 103–282 (LWDKFHDLGT…SNPFAKGFRD (180 aa)).

The protein resides in the nucleus. Its function is as follows. Transcriptional regulator that may be involved in heart developmental processes. In Xenopus tropicalis (Western clawed frog), this protein is T-box transcription factor TBX20 (tbx20).